The chain runs to 303 residues: Ribosomal protein uL3 glutamine methyltransferase (303 aa).

This sequence belongs to the protein N5-glutamine methyltransferase family. PrmB subfamily.

The catalysed reaction is L-glutaminyl-[ribosomal protein uL3] + S-adenosyl-L-methionine = N(5)-methyl-L-glutaminyl-[ribosomal protein uL3] + S-adenosyl-L-homocysteine + H(+). Its function is as follows. Methylates large ribosomal subunit protein uL3 on a specific glutamine residue. This chain is Ribosomal protein uL3 glutamine methyltransferase, found in Neisseria meningitidis serogroup B (strain ATCC BAA-335 / MC58).